A 315-amino-acid polypeptide reads, in one-letter code: Olfactory receptor 11A1 (315 aa).

Residues 1–27 (MEIVSTGNETITEFVLLGFYDIPELHF) lie on the Extracellular side of the membrane. Asparagine 8 is a glycosylation site (N-linked (GlcNAc...) asparagine). The chain crosses the membrane as a helical span at residues 28 to 48 (LFFIVFTAVYVFIIIGNMLII). Residues 49–56 (VAVVSSQR) lie on the Cytoplasmic side of the membrane. The chain crosses the membrane as a helical span at residues 57 to 77 (LHKPMYIFLANLSFLDILYTS). The Extracellular segment spans residues 78–100 (AVMPKMLEGFLQEATISVAGCLL). The cysteines at positions 98 and 190 are disulfide-linked. A helical membrane pass occupies residues 101 to 121 (QFFIFGSLATAECLLLAVMAY). The Cytoplasmic portion of the chain corresponds to 122–140 (DRYLAICYPLHYPLLMGPR). Residues 141-161 (RYMGLVVTTWLSGFVVDGLVV) traverse the membrane as a helical segment. Over 162 to 198 (ALVAQLRFCGPNHIDQFYCDFMLFVGLACSDPRVAQV) the chain is Extracellular. Residues 199–218 (TTLILSVFCLTIPFGLILTS) traverse the membrane as a helical segment. Residues 219 to 238 (YARIVVAVLRVPAGASRRRA) are Cytoplasmic-facing. The chain crosses the membrane as a helical span at residues 239–259 (FSTCSSHLAVVTTFYGTLMIF). At 260-272 (YVAPSAVHSQLLS) the chain is on the extracellular side. The chain crosses the membrane as a helical span at residues 273–293 (KVFSLLYTVVTPLFNPVIYTM). Over 294–315 (RNKEVHQALRKILCIKQTETLD) the chain is Cytoplasmic.

It belongs to the G-protein coupled receptor 1 family.

It localises to the cell membrane. Its function is as follows. Odorant receptor. The protein is Olfactory receptor 11A1 (OR11A1) of Homo sapiens (Human).